The primary structure comprises 375 residues: Biotin synthase, mitochondrial (375 aa).

Residues 1–16 constitute a mitochondrion transit peptide; the sequence is MMSTIYRHLSTARPAL. One can recognise a Radical SAM core domain in the interval 81–310; that stretch reads HDPTKVQLCT…IATARIVMPK (230 aa). Positions 99, 103, and 106 each coordinate [4Fe-4S] cluster. [2Fe-2S] cluster-binding residues include cysteine 143, cysteine 176, cysteine 236, and arginine 314.

It belongs to the radical SAM superfamily. Biotin synthase family. [4Fe-4S] cluster is required as a cofactor. The cofactor is [2Fe-2S] cluster.

It is found in the mitochondrion. The enzyme catalyses (4R,5S)-dethiobiotin + (sulfur carrier)-SH + 2 reduced [2Fe-2S]-[ferredoxin] + 2 S-adenosyl-L-methionine = (sulfur carrier)-H + biotin + 2 5'-deoxyadenosine + 2 L-methionine + 2 oxidized [2Fe-2S]-[ferredoxin]. It participates in cofactor biosynthesis; biotin biosynthesis; biotin from 7,8-diaminononanoate: step 2/2. The polypeptide is Biotin synthase, mitochondrial (BIO2) (Saccharomyces cerevisiae (strain ATCC 204508 / S288c) (Baker's yeast)).